Here is a 496-residue protein sequence, read N- to C-terminus: Transcription factor CP2 (496 aa).

Positions 61–300 (ENKILPFQYV…SPGFNSSHSS (240 aa)) constitute a Grh/CP2 DB domain. Residues 133–386 (EHQQLEGWRW…LFNALKGRMV (254 aa)) are DNA-binding. Disordered stretches follow at residues 238–268 (FKPKGADRKQKTDREKMEKRTPHEKEKYQPS) and 296–327 (SSHSSFSIGEGNGSPNHQPEPPPPIADNLLPT). A compositionally biased stretch (basic and acidic residues) spans 241-265 (KGADRKQKTDREKMEKRTPHEKEKY).

Belongs to the grh/CP2 family. CP2 subfamily. As to quaternary structure, component of the SSP (stage selector protein) complex, which appears to be a heteromer of TFCP2 and 2 copies of NFE4. As to expression, expressed in the epiblast at the pre-primitive streak stage. At the primitive streak stage, expressed in the extending primitive streak and in the prospective neural plate. At stages 7 and 8, expressed in the neural folds, somites and in the regressing primitive streak. At stage 12, ubiquitously expressed in the whole embryo.

It localises to the nucleus. Functionally, binds the B-response element 5'-CAAGTCCAGGCAAGT-3' of the ENS1/ERNI promoter. May be the major transcription activator thus being essential for its expression. This chain is Transcription factor CP2 (TFCP2), found in Gallus gallus (Chicken).